The chain runs to 526 residues: ATP-dependent RNA helicase DBP3 (526 aa).

Basic and acidic residues predominate over residues 1–33; sequence MVEEHKNKKRRQEDGPADVPEKKVKVSKSEKKD. Positions 1–86 are disordered; that stretch reads MVEEHKNKKR…SSQGYTQSES (86 aa). Residues 34 to 65 show a composition bias toward basic residues; the sequence is KKEKKEKKEKKEKKEKKEKKEKKEKKEKKKKY. Residues 69-86 are compositionally biased toward polar residues; it reads ATISGSAQSSQGYTQSES. Residues 118 to 144 carry the Q motif motif; it reads LSFDQIQLNSKISAVVNKFPTPTPIQS. The 172-residue stretch at 147–318 folds into the Helicase ATP-binding domain; the sequence is WPYLLSGKDV…STFMNQPVKV (172 aa). 160 to 167 contacts ATP; it reads AETGSGKT. The DEAD box motif lies at 265-268; the sequence is DEAD. The Helicase C-terminal domain maps to 334-496; it reads QIVEVIEPFD…PVPDELLKFG (163 aa).

It belongs to the DEAD box helicase family. DDX5/DBP2 subfamily.

The protein localises to the nucleus. Its subcellular location is the nucleolus. It catalyses the reaction ATP + H2O = ADP + phosphate + H(+). In terms of biological role, ATP-dependent RNA helicase required for 60S ribosomal subunit synthesis. Involved in efficient pre-rRNA processing, predominantly at site A3, which is necessary for the normal formation of 25S and 5.8S rRNAs. This Scheffersomyces stipitis (strain ATCC 58785 / CBS 6054 / NBRC 10063 / NRRL Y-11545) (Yeast) protein is ATP-dependent RNA helicase DBP3 (DBP3).